A 217-amino-acid polypeptide reads, in one-letter code: Ras-related protein RIC2 (217 aa).

Residues 21–28, 69–73, and 127–130 each bind GTP; these read GDSGVGKS, DTAGQ, and NKSD. 2 S-geranylgeranyl cysteine lipidation sites follow: cysteine 214 and cysteine 215.

It belongs to the small GTPase superfamily. Rab family.

It is found in the cell membrane. Its function is as follows. Possesses GTPase activity. The polypeptide is Ras-related protein RIC2 (RIC2) (Oryza sativa subsp. japonica (Rice)).